The chain runs to 271 residues: Proteasome inhibitor PI31 subunit (271 aa).

Ala2 is subject to N-acetylalanine. The important for homodimerization and interaction with FBXO7 stretch occupies residues 2–150 (AGLEVLFASA…PIHEQWEKAN (149 aa)). Ser153 carries the post-translational modification Phosphoserine. Residue Arg205 is modified to Omega-N-methylarginine. Arg219 is modified (asymmetric dimethylarginine). Positions 222-271 (IDPSSGLPNRLPPGAVPPGARFDPFGPIGTSPPGPNPDHLPPPGYDDMYL) are disordered. Arg231 bears the Omega-N-methylarginine mark. The span at 251–265 (TSPPGPNPDHLPPPG) shows a compositional bias: pro residues. Ser252 carries the post-translational modification Phosphoserine.

This sequence belongs to the proteasome inhibitor PI31 family. In terms of assembly, monomer and homodimer. Interacts with FBXO7.

It is found in the cytoplasm. It localises to the endoplasmic reticulum. Its function is as follows. Plays an important role in control of proteasome function. Inhibits the hydrolysis of protein and peptide substrates by the 20S proteasome. Also inhibits the activation of the proteasome by the proteasome regulatory proteins PA700 and PA28. In Pongo abelii (Sumatran orangutan), this protein is Proteasome inhibitor PI31 subunit (PSMF1).